Here is an 870-residue protein sequence, read N- to C-terminus: Valine--tRNA ligase (870 aa).

Over residues 1-13 (MTSQTFTTSSATP) the composition is skewed to polar residues. The segment at 1 to 21 (MTSQTFTTSSATPPTRGVVPD) is disordered. The 'HIGH' region signature appears at 63–73 (PTVSGHLHPGH). A disordered region spans residues 479 to 505 (YDHPLLPDESALPVDPASQPPSGYQES). A 'KMSKS' region motif is present at residues 595–599 (KMSKS). ATP is bound at residue Lys598.

The protein belongs to the class-I aminoacyl-tRNA synthetase family. ValS type 2 subfamily. In terms of assembly, monomer.

Its subcellular location is the cytoplasm. It catalyses the reaction tRNA(Val) + L-valine + ATP = L-valyl-tRNA(Val) + AMP + diphosphate. Catalyzes the attachment of valine to tRNA(Val). As ValRS can inadvertently accommodate and process structurally similar amino acids such as threonine, to avoid such errors, it has a 'posttransfer' editing activity that hydrolyzes mischarged Thr-tRNA(Val) in a tRNA-dependent manner. This chain is Valine--tRNA ligase, found in Cutibacterium acnes (strain DSM 16379 / KPA171202) (Propionibacterium acnes).